The sequence spans 868 residues: DNA mismatch repair protein MutS (868 aa).

Gly623–Ser630 provides a ligand contact to ATP.

It belongs to the DNA mismatch repair MutS family.

In terms of biological role, this protein is involved in the repair of mismatches in DNA. It is possible that it carries out the mismatch recognition step. This protein has a weak ATPase activity. This Magnetococcus marinus (strain ATCC BAA-1437 / JCM 17883 / MC-1) protein is DNA mismatch repair protein MutS.